Reading from the N-terminus, the 491-residue chain is Pre-glycoprotein polyprotein GP complex (491 aa).

Gly2 carries N-myristoyl glycine; by host lipidation. Residues 2-17 (GQIVTFFQEVPHVIEE) lie on the Extracellular side of the membrane. The helical transmembrane segment at 18–33 (VMNIVLIALSVLAVLK) threads the bilayer. The Cytoplasmic portion of the chain corresponds to 34–58 (GLYNFATCGLVGLVTFLLLCGRSCT). Cys57 contributes to the Zn(2+) binding site. At 59 to 432 (TSLYKGVYEL…QGKTPLGLVD (374 aa)) the chain is on the extracellular side. N-linked (GlcNAc...) asparagine; by host glycosylation is found at Asn79, Asn89, Asn99, Asn109, Asn119, and Asn167. 6 disulfide bridges follow: Cys86-Cys231, Cys118-Cys155, Cys180-Cys212, Cys279-Cys292, Cys301-Cys310, and Cys364-Cys385. A glycan (N-linked (GlcNAc...) asparagine; by host) is linked at Asn224. N-linked (GlcNAc...) asparagine; by host glycosylation is found at Asn365, Asn373, Asn390, and Asn395. Residues 433–453 (LFVFSTSFYLISIFLHLVKIP) traverse the membrane as a helical segment. Residues 454–491 (THRHIVGKSCPKPHRLNHMGICSCGLYKQPGVPVKWKR) lie on the Cytoplasmic side of the membrane. The Zn(2+) site is built by His455, His457, Cys463, His467, Cys475, and Cys477.

The protein belongs to the arenaviridae GPC protein family. In terms of assembly, interacts with glycoprotein G2. Part of the GP complex (GP-C) together with glycoprotein G1 and glycoprotein G2. The GP-complex interacts with protein Z, which interacts with ribonucleocapsid; these interactions may induce virion budding. As to quaternary structure, homotrimer; disulfide-linked. In pre-fusion state, G1 homotrimers bind G2 homotrimers via ionic interactions. Part of the GP complex (GP-C) together with glycoprotein G2 and the stable signal peptide. Interacts with the primary host receptor DAG1 on the cell surface; this interaction occurs at pH 8.0 but not at pH 6.0 and below. Upon virus internalization and at endosomal pH, interacts with the host lysosomal protein LAMP1; this interaction mediates G1 dissociation from GP-C and membrane fusion. The GP-complex interacts with protein Z, which interacts with ribonucleocapsid; these interactions may induce virion budding. Homotrimer. Interacts with the stable signal peptide. In pre-fusion state, G2 homotrimers bind G1 homotrimers via ionic interactions. Part of the GP complex (GP-C) together with glycoprotein G1 and the stable signal peptide. Acidification in the endosome triggers rearrangements, which ultimately leads to a 6 helix bundle formed by the two heptad repeat domains (HR1 and HR2) in post-fusion state. The GP-complex interacts with protein Z, which interacts with ribonucleocapsid; these interactions may induce virion budding. In terms of processing, specific enzymatic cleavages in vivo yield mature proteins. GP-C polyprotein is cleaved in the endoplasmic reticulum by the host protease MBTPS1. Only cleaved glycoprotein is incorporated into virions. The SSP remains stably associated with the GP complex following cleavage by signal peptidase and plays crucial roles in the trafficking of GP through the secretory pathway. Post-translationally, myristoylation is necessary for GP2-mediated fusion activity.

The protein resides in the virion membrane. Its subcellular location is the host endoplasmic reticulum membrane. It is found in the host Golgi apparatus membrane. The protein localises to the host cell membrane. Functions as a cleaved signal peptide that is retained as the third component of the GP complex (GP-C). Helps to stabilize the spike complex in its native conformation. The SSP is required for efficient glycoprotein expression, post-translational maturation cleavage of G1 and G2, glycoprotein transport to the cell surface plasma membrane, formation of infectious virus particles, and acid pH-dependent glycoprotein-mediated cell fusion. In terms of biological role, forms the virion spikes together with glycoprotein G2. The glycoprotein spike trimers are connected to the underlying matrix. Interacts with the host receptor. Mediates virus attachment to the host primary receptor alpha-dystroglycan DAG1 (alpha-DG) at the cell surface. This attachment induces virion internalization apparently through macropinocytosis. Following endocytosis, there is a pH-dependent switch from binding DAG1 to the host lysosomal receptor LAMP1. This latter binding triggers the dissociation of GP1, exposing the fusion subunit, GP2, such that fusion can occur. Down-modulates host DAG1. Functionally, forms the virion spikes together with glycoprotein G1. The glycoprotein spike trimers are connected to the underlying matrix. Class I viral fusion protein that directs fusion of viral and host endosomal membranes, leading to delivery of the nucleocapsid into the cytoplasm. Membrane fusion is mediated by irreversible conformational changes induced by acidification. The chain is Pre-glycoprotein polyprotein GP complex from Homo sapiens (Human).